A 93-amino-acid polypeptide reads, in one-letter code: Putative ribosomal protein eL43-like (93 aa).

The segment at 40 to 61 (CSFCGKTKMKRRAVKIRHCNSC) adopts a C4-type zinc-finger fold.

This sequence belongs to the eukaryotic ribosomal protein eL43 family.

This chain is Putative ribosomal protein eL43-like (RPL37AP8), found in Homo sapiens (Human).